An 893-amino-acid polypeptide reads, in one-letter code: Eukaryotic translation initiation factor 3 subunit A (893 aa).

A PCI domain is found at 319-502 (LQRMAAHVLL…NSIFFGTDLT (184 aa)). Coiled coils occupy residues 576-707 (QKII…RAKR) and 784-881 (EIAL…REVA). Disordered stretches follow at residues 592–634 (AREL…EIQA) and 837–893 (AEAR…RRRQ). Residues 837–881 (AEARRLEREAEDEKRRQQYEKQRAKEEEAERKIQEDRDRLAREVA) are compositionally biased toward basic and acidic residues.

Belongs to the eIF-3 subunit A family. In terms of assembly, component of the eukaryotic translation initiation factor 3 (eIF-3) complex. The eIF-3 complex interacts with pix.

The protein resides in the cytoplasm. RNA-binding component of the eukaryotic translation initiation factor 3 (eIF-3) complex, which is involved in protein synthesis of a specialized repertoire of mRNAs and, together with other initiation factors, stimulates binding of mRNA and methionyl-tRNAi to the 40S ribosome. The eIF-3 complex specifically targets and initiates translation of a subset of mRNAs involved in cell proliferation. The polypeptide is Eukaryotic translation initiation factor 3 subunit A (Drosophila grimshawi (Hawaiian fruit fly)).